A 341-amino-acid chain; its full sequence is Ribosomal RNA small subunit methyltransferase C (341 aa).

This sequence belongs to the methyltransferase superfamily. RsmC family. In terms of assembly, monomer.

Its subcellular location is the cytoplasm. It carries out the reaction guanosine(1207) in 16S rRNA + S-adenosyl-L-methionine = N(2)-methylguanosine(1207) in 16S rRNA + S-adenosyl-L-homocysteine + H(+). Its function is as follows. Specifically methylates the guanine in position 1207 of 16S rRNA in the 30S particle. This chain is Ribosomal RNA small subunit methyltransferase C, found in Shewanella amazonensis (strain ATCC BAA-1098 / SB2B).